The sequence spans 226 residues: uncharacterized protein (226 aa).

Belongs to the SSM1 family.

This is an uncharacterized protein from Schizosaccharomyces pombe (strain 972 / ATCC 24843) (Fission yeast).